The primary structure comprises 511 residues: Centrosomal protein CCDC61 (511 aa).

Residues 1 to 144 (MEVGTVVQEE…PLPLPYLGKP (144 aa)) form a head domain region. Residues 147-272 (AELQKEIRAL…RVKSLTTELA (126 aa)) adopt a coiled-coil conformation. Disordered stretches follow at residues 306-403 (TRVG…SREP) and 447-486 (RGRK…SMDT). The span at 315 to 335 (GSRERIEDRGRRSEERVRRAD) shows a compositional bias: basic and acidic residues. The span at 338–352 (GSRNCITRPSPSPTG) shows a compositional bias: polar residues. Positions 366 to 378 (DRQRRQKEAELKS) are enriched in basic and acidic residues.

This sequence belongs to the CCDC61 family. In terms of assembly, forms homodimers (via head domain).

It is found in the cytoplasm. The protein resides in the cytoskeleton. Its subcellular location is the microtubule organizing center. It localises to the centrosome. The protein localises to the centriolar satellite. It is found in the cilium basal body. In terms of biological role, microtubule-binding centrosomal protein required for centriole cohesion, independently of the centrosome-associated protein/CEP250 and rootletin/CROCC linker. In interphase, required for anchoring microtubule at the mother centriole subdistal appendages and for centrosome positioning. During mitosis, may be involved in spindle assembly and chromatin alignment by regulating the organization of spindle microtubules into a symmetrical structure. Plays a non-essential role in ciliogenesis. The polypeptide is Centrosomal protein CCDC61 (Danio rerio (Zebrafish)).